Reading from the N-terminus, the 838-residue chain is Ras-interacting protein RIP3 (838 aa).

Disordered stretches follow at residues Val66–Ala97, Lys157–Lys290, and Asn305–Ala336. 3 stretches are compositionally biased toward low complexity: residues Ser67–Ala97, Lys157–Pro241, and Pro248–Gln284. Positions Gln310–Lys321 are enriched in basic and acidic residues. The region spanning Gln441–Asn515 is the CRIM domain. 2 disordered regions span residues Lys522–Gln581 and Gln594–Ala646. Low complexity-rich tracts occupy residues Asn537 to Asn556, Gln563 to Gln581, and Gln594 to Gln620. Over residues Val621–Asn631 the composition is skewed to gly residues. One can recognise an RBD domain in the interval Leu648–Arg717.

Belongs to the SIN1 family. Interacts with activated RasG. Part of a complex, TORC2, consisting of tor, lst8, piaA and ripA. Additional proteins, such as 14-3-3 and heat-shock proteins, may also belong to the TORC2 complex.

Component of a Ras-regulated pathway involved in integrating chemotaxis and signal relay pathways that are essential for aggregation. This is Ras-interacting protein RIP3 (ripA) from Dictyostelium discoideum (Social amoeba).